The following is a 271-amino-acid chain: Bifunctional protein FolD (271 aa).

Residues 154–156 (GRS), serine 181, and isoleucine 222 contribute to the NADP(+) site.

This sequence belongs to the tetrahydrofolate dehydrogenase/cyclohydrolase family. In terms of assembly, homodimer.

It catalyses the reaction (6R)-5,10-methylene-5,6,7,8-tetrahydrofolate + NADP(+) = (6R)-5,10-methenyltetrahydrofolate + NADPH. The catalysed reaction is (6R)-5,10-methenyltetrahydrofolate + H2O = (6R)-10-formyltetrahydrofolate + H(+). It participates in one-carbon metabolism; tetrahydrofolate interconversion. Catalyzes the oxidation of 5,10-methylenetetrahydrofolate to 5,10-methenyltetrahydrofolate and then the hydrolysis of 5,10-methenyltetrahydrofolate to 10-formyltetrahydrofolate. This chain is Bifunctional protein FolD, found in Thermotoga sp. (strain RQ2).